The sequence spans 3351 residues: Apolipophorins (3351 aa).

A signal peptide spans 1–25; that stretch reads MARMKYNIALIGILASVLLTIAVNA. The 599-residue stretch at 43–641 folds into the Vitellogenin domain; the sequence is YIPGNYYDYS…SQHGFLPRSS (599 aa). Residues asparagine 67, asparagine 644, asparagine 1514, asparagine 1744, asparagine 1932, asparagine 1979, and asparagine 2822 are each glycosylated (N-linked (GlcNAc...) asparagine). Residues 2786–2952 enclose the VWFD domain; it reads LRGHVVDGKH…DYGVGKCTAI (167 aa).

Interacts with Nrx-1 (via cytoplasmic domain); the interaction supports apolpp/ApoLI protein stability. Post-translationally, may be modified covalently by lipidation. In terms of processing, cleaved into 2 chains by furin protease. However, prevention of cleavage does not impair its function. In terms of tissue distribution, during stage 12, it is highly present throughout the yolk sac. By late stage 14, it localizes in the lateral fat body cells. Starting at stage 14, it localizes to the apodemes. Component of hemolymph clots (at protein level). Expressed in the amniosera. Expressed in rhabdomere of photoreceptor cells in retina (at protein level). Expressed in rhabdomere of photoreceptor cells in retina (at protein level). As to expression, expressed in simper cells as well as interphotoreceptor matrix (at protein level).

It localises to the secreted. Its subcellular location is the cell projection. The protein resides in the rhabdomere. Constitutes the major component of lipophorin, which mediates transport for various types of lipids in hemolymph. Acts by forming lipoprotein particles that bind lipoproteins and lipids. Also involved in the transport of hydrophobic ligands like juvenile hormones, pheromone hydrocarbons and carotenoids. Required for morphogens wingless (wg) and hedgehog (hh) function, probably by acting as vehicles for the movement of wg and hh, explaining how covalently lipidated wg and hh can spread over long distances. May also be involved in transport and/or metabolism of heme. Involved in yolk granule formation. May be a component of yolk incorporated into yolk granules via yl/yolkless-mediated endocytosis and the endolysosomal pathway. This is Apolipophorins from Drosophila melanogaster (Fruit fly).